Here is a 90-residue protein sequence, read N- to C-terminus: uncharacterized protein (90 aa).

This is an uncharacterized protein from Saccharolobus islandicus (Sulfolobus islandicus).